Here is a 551-residue protein sequence, read N- to C-terminus: Alkaline nuclease (551 aa).

It belongs to the herpesviridae alkaline nuclease family. As to quaternary structure, interacts with major DNA-binding protein; this interaction increases the nuclease processivity of the alkaline exonuclease.

It is found in the host nucleus. The protein localises to the host cytoplasm. Functionally, plays a role in processing non linear or branched viral DNA intermediates in order to promote the production of mature packaged unit-length linear progeny viral DNA molecules. Exhibits endonuclease and exonuclease activities and accepts both double-stranded and single-stranded DNA as substrate. Exonuclease digestion of DNA is in the 5'-&gt; 3' direction and the products are 5'-monophosphate nucleosides. Additionally, forms a recombinase with the major DNA-binding protein, which displays strand exchange activity. The sequence is that of Alkaline nuclease from Homo sapiens (Human).